We begin with the raw amino-acid sequence, 596 residues long: Elongation factor 4 (596 aa).

Positions 2-184 (KHIRNFSIIA…VIVDQIPPPE (183 aa)) constitute a tr-type G domain. Residues 14–19 (DHGKST) and 131–134 (NKID) contribute to the GTP site.

This sequence belongs to the TRAFAC class translation factor GTPase superfamily. Classic translation factor GTPase family. LepA subfamily.

The protein resides in the cell inner membrane. It carries out the reaction GTP + H2O = GDP + phosphate + H(+). In terms of biological role, required for accurate and efficient protein synthesis under certain stress conditions. May act as a fidelity factor of the translation reaction, by catalyzing a one-codon backward translocation of tRNAs on improperly translocated ribosomes. Back-translocation proceeds from a post-translocation (POST) complex to a pre-translocation (PRE) complex, thus giving elongation factor G a second chance to translocate the tRNAs correctly. Binds to ribosomes in a GTP-dependent manner. The protein is Elongation factor 4 of Shewanella sp. (strain ANA-3).